Consider the following 236-residue polypeptide: Small ribosomal subunit protein uS3 (236 aa).

The region spanning 39–107 (IRLYVLEELK…ETSLNIVEIH (69 aa)) is the KH type-2 domain. Residues 216-236 (ERRAAEVDHSGSSSNRRRENA) are disordered.

The protein belongs to the universal ribosomal protein uS3 family. As to quaternary structure, part of the 30S ribosomal subunit. Forms a tight complex with proteins S10 and S14.

Binds the lower part of the 30S subunit head. Binds mRNA in the 70S ribosome, positioning it for translation. The protein is Small ribosomal subunit protein uS3 of Bartonella henselae (strain ATCC 49882 / DSM 28221 / CCUG 30454 / Houston 1) (Rochalimaea henselae).